Consider the following 522-residue polypeptide: Penicillin-sensitive carboxypeptidase A (522 aa).

Serine 94 serves as the catalytic Acyl-ester intermediate. The Proton acceptor role is filled by lysine 97. Serine 351 is a catalytic residue. Lysine 461 contributes to the substrate binding site.

This sequence belongs to the peptidase S13 family.

It catalyses the reaction Preferential cleavage: (Ac)2-L-Lys-D-Ala-|-D-Ala. Also transpeptidation of peptidyl-alanyl moieties that are N-acyl substituents of D-alanine.. With respect to regulation, inhibited by penicillin G. Functionally, carboxypeptidase. The protein is Penicillin-sensitive carboxypeptidase A (pscA) of Dictyostelium discoideum (Social amoeba).